The following is a 401-amino-acid chain: MGRAKKVVLAYSGGVDTSVCIPYLKQEWGVEEVITFAADLGQGDELEPIRRKALEAGASQSLVGDLIQPFIEEFAFPAIRANALYEGRYPLSTALARPLIARRLVEVAREVGADAVAHGCTGKGNDQVRFDVAIAALAPDLKVLTPAREWGMSREETIAYGERCGLPAPVSKKSPYSIDLNLLGRSVEAGPLEDPMQAPPEEVFAMTVSIDAAPSEAEEIEIAFEAGNPVSINGQRLDPVALIREANRLAGSHGIGRLDMIENRVVGIKSREIYETPGLLLLIQAHQELESLTLAADVLRTKRQLEMQWADLVYQGLWFGPLKEALDGFMDRTQSEVNGVVRLRLHKGNAIVTGRGSSDSSLYVPEMASYGSEDQFDHRAAEGFIYVWGLPIRLWSAARRR.

Residues 10-18 (AYSGGVDTS) and Ala38 each bind ATP. Tyr89 provides a ligand contact to L-citrulline. Gly119 contributes to the ATP binding site. L-aspartate is bound by residues Thr121, Asn125, and Asp126. Asn125 lines the L-citrulline pocket. Residues Arg129, Ser177, Ser186, Glu262, and Tyr274 each contribute to the L-citrulline site.

Belongs to the argininosuccinate synthase family. Type 1 subfamily. Homotetramer.

The protein localises to the cytoplasm. The enzyme catalyses L-citrulline + L-aspartate + ATP = 2-(N(omega)-L-arginino)succinate + AMP + diphosphate + H(+). It functions in the pathway amino-acid biosynthesis; L-arginine biosynthesis; L-arginine from L-ornithine and carbamoyl phosphate: step 2/3. The sequence is that of Argininosuccinate synthase from Synechococcus sp. (strain WH7803).